We begin with the raw amino-acid sequence, 326 residues long: MSRSLVFFFLFLVLVVPCLSHGTGGDHDDDEASHVKSSDLKSKSLISVKIACLVIIFVLTFISGVSPYFLKWSQGFLVLGTQFAGGVFLATALMHFLSDADETFRGLLTAEGESEPSPAYPFAYMLACAGFMLTMLADSVIAHIYSKTQNDLELQGEDKSNQRSATTETSIGDSILLIVALCFHSVFEGIAIGISETKSDAWRALWTITLHKIFAAIAMGIALLRMIPDRPLFSSITYSFAFAISSPIGVAIGIVIDATTQGSIADWIFALSMSLACGVFVYVSVNHLLAKGYRPNKKVHVDEPRYKFLAVLFGVVVIAIVMIWDT.

The first 20 residues, Met1 to Ser20, serve as a signal peptide directing secretion. Over His21–Lys49 the chain is Extracellular. The chain crosses the membrane as a helical span at residues Ile50–Leu70. Topologically, residues Lys71–Gly75 are cytoplasmic. Residues Phe76–Phe96 traverse the membrane as a helical segment. Over Leu97 to Pro121 the chain is Extracellular. A helical membrane pass occupies residues Phe122–Ala142. Topologically, residues His143–Ser174 are cytoplasmic. A helical transmembrane segment spans residues Ile175 to Ser195. Over Glu196 to Arg203 the chain is Extracellular. A helical transmembrane segment spans residues Ala204–Leu224. Residues Arg225–Ser235 are Cytoplasmic-facing. A helical transmembrane segment spans residues Ile236–Ile256. At Asp257–Gly262 the chain is on the extracellular side. A helical membrane pass occupies residues Ser263 to Val283. The Cytoplasmic segment spans residues Ser284–Arg305. The chain crosses the membrane as a helical span at residues Tyr306–Thr326.

The protein belongs to the ZIP transporter (TC 2.A.5) family.

Its subcellular location is the cell membrane. In terms of biological role, probably mediates zinc uptake from the rhizosphere. This chain is Zinc transporter 11 (ZIP11), found in Arabidopsis thaliana (Mouse-ear cress).